Reading from the N-terminus, the 81-residue chain is Tissue- and phase-specific nuclear protein (81 aa).

In terms of tissue distribution, expressed in oviduct, where expression levels are higher in uterine sections than in tuba sections. No expression detected in small intestine and liver (at protein level).

Its subcellular location is the nucleus. The polypeptide is Tissue- and phase-specific nuclear protein (Podarcis siculus (Italian wall lizard)).